A 387-amino-acid polypeptide reads, in one-letter code: Phosphoglycerate kinase (387 aa).

Substrate-binding positions include 21–23 (DLN), Arg36, 59–62 (HLGR), Arg113, and Arg146. ATP-binding positions include Lys197, Glu314, and 340 to 343 (GGDT).

It belongs to the phosphoglycerate kinase family. In terms of assembly, monomer.

The protein localises to the cytoplasm. It catalyses the reaction (2R)-3-phosphoglycerate + ATP = (2R)-3-phospho-glyceroyl phosphate + ADP. Its pathway is carbohydrate degradation; glycolysis; pyruvate from D-glyceraldehyde 3-phosphate: step 2/5. This is Phosphoglycerate kinase from Proteus mirabilis (strain HI4320).